We begin with the raw amino-acid sequence, 377 residues long: Citrate synthase (377 aa).

Residues histidine 220, histidine 259, and aspartate 313 contribute to the active site.

This sequence belongs to the citrate synthase family. As to quaternary structure, homodimer.

The catalysed reaction is oxaloacetate + acetyl-CoA + H2O = citrate + CoA + H(+). The protein operates within carbohydrate metabolism; tricarboxylic acid cycle; isocitrate from oxaloacetate: step 1/2. Might regulate the synthesis and function of enzymes involved in later enzymatic steps of Krebs cycle. Loss in activity results in sporulation defect. This chain is Citrate synthase (gltA), found in Deinococcus radiodurans (strain ATCC 13939 / DSM 20539 / JCM 16871 / CCUG 27074 / LMG 4051 / NBRC 15346 / NCIMB 9279 / VKM B-1422 / R1).